Reading from the N-terminus, the 329-residue chain is MLSLPRLWTHTGPLTLLLLPVAWFFASLVTVRRLAFRRGWLTRVDVGIPVIVVGNITAGGSGKTPLVIWLTNWLREQGHRPGVVSRGYGGKARRCVELGAESTAAEVGDEPLLIHRKTGAPVVVGRDRPAAARVLRARHPEVDIIVSDDGLQHYRLGRALELAVLDAATGFGNGWPLPAGPLREPFRRLHEVDGVVQVVRGGGAWRTYLGLKTWRADYRAGDARRLRAPEERKPLRALAQREWLAATGIGRPEGFFAMLEAHGVRHRPRAFPDHHAFRPDDLPAGGAVLMTEKDAVKCADFAGPDWWAVDLEVVPEAGFVEWLRTRLGS.

ATP is bound at residue 57 to 64 (TAGGSGKT).

It belongs to the LpxK family.

The enzyme catalyses a lipid A disaccharide + ATP = a lipid IVA + ADP + H(+). It participates in glycolipid biosynthesis; lipid IV(A) biosynthesis; lipid IV(A) from (3R)-3-hydroxytetradecanoyl-[acyl-carrier-protein] and UDP-N-acetyl-alpha-D-glucosamine: step 6/6. In terms of biological role, transfers the gamma-phosphate of ATP to the 4'-position of a tetraacyldisaccharide 1-phosphate intermediate (termed DS-1-P) to form tetraacyldisaccharide 1,4'-bis-phosphate (lipid IVA). This is Tetraacyldisaccharide 4'-kinase from Thiobacillus denitrificans (strain ATCC 25259 / T1).